The sequence spans 439 residues: 3-phosphoshikimate 1-carboxyvinyltransferase (439 aa).

Lys25, Ser26, and Arg30 together coordinate 3-phosphoshikimate. A phosphoenolpyruvate-binding site is contributed by Lys25. Residues Gly96 and Arg124 each contribute to the phosphoenolpyruvate site. 6 residues coordinate 3-phosphoshikimate: Ser170, Ser171, Gln172, Ser202, Asp324, and Lys351. Position 172 (Gln172) interacts with phosphoenolpyruvate. Asp324 (proton acceptor) is an active-site residue. Residues Arg355, Arg399, and Lys424 each coordinate phosphoenolpyruvate.

The protein belongs to the EPSP synthase family. As to quaternary structure, monomer.

It localises to the cytoplasm. It catalyses the reaction 3-phosphoshikimate + phosphoenolpyruvate = 5-O-(1-carboxyvinyl)-3-phosphoshikimate + phosphate. It functions in the pathway metabolic intermediate biosynthesis; chorismate biosynthesis; chorismate from D-erythrose 4-phosphate and phosphoenolpyruvate: step 6/7. Catalyzes the transfer of the enolpyruvyl moiety of phosphoenolpyruvate (PEP) to the 5-hydroxyl of shikimate-3-phosphate (S3P) to produce enolpyruvyl shikimate-3-phosphate and inorganic phosphate. In Bordetella avium (strain 197N), this protein is 3-phosphoshikimate 1-carboxyvinyltransferase.